We begin with the raw amino-acid sequence, 421 residues long: MIHDTSARSRTAVFSAWRGRCSRLTRDRWRVALLILLSIAVGAVGWSGEALLLPTAMLFPLLWAQSPSRLVAGAVSAGYFLTASRGLPQGVANFYAADFWHGLLLWLAASAGFVAVHAAFWPARLQKRLPGRGALGWGKPVRYLAAAVLMGLPPFGITGWAHPLTAAGILFPGFGWWGLGATTAGLAMMTSRYWPAAAIALGGFWFWSAATWTQPVLPDGWKGVDLEQGQTLGRDGSLDHHRDLIATVRAAAGAETRVIVLPESALGLWTPTVARLWQAGLRGADVTVIAGAAVIDPGGYDNVMVTVSEGETRILYRERMPIPVSMWQPWLQWTGQGGGAQAHFFANPAVDLAGTRIAPLICYEQLIVWPILHSMLFSPAAIVATGNGWWTEGTSIVAIQQAGVIAWAKLFGRPVVTAFNT.

8 consecutive transmembrane segments (helical) span residues 33 to 53 (LLIL…ALLL), 103 to 123 (LLLW…FWPA), 144 to 164 (LAAA…AHPL), 169 to 189 (ILFP…LAMM), 193 to 213 (YWPA…ATWT), 287 to 307 (TVIA…MVTV), 366 to 386 (LIVW…VATG), and 388 to 408 (GWWT…IAWA). Positions 222–421 (KGVDLEQGQT…GRPVVTAFNT (200 aa)) constitute a CN hydrolase domain.

It localises to the cell membrane. Its function is as follows. Enhances conjugal transfer of the Ti plasmid. This chain is Conjugal transfer protein TraB (traB), found in Agrobacterium fabrum (strain C58 / ATCC 33970) (Agrobacterium tumefaciens (strain C58)).